Consider the following 483-residue polypeptide: Rhamnulokinase (483 aa).

Residue 11 to 15 (ASSGR) participates in ATP binding. Substrate contacts are provided by residues Gly79 and 234–236 (HDT). Residue Asp235 is the Proton acceptor of the active site. Thr257 contributes to the ATP binding site. Position 294 (Asn294) interacts with substrate. Gln302 contributes to the ATP binding site. Cys352 and Cys369 are joined by a disulfide. Gly401 lines the ATP pocket.

The protein belongs to the rhamnulokinase family. Requires Mg(2+) as cofactor.

It catalyses the reaction L-rhamnulose + ATP = L-rhamnulose 1-phosphate + ADP + H(+). Its pathway is carbohydrate degradation; L-rhamnose degradation; glycerone phosphate from L-rhamnose: step 2/3. Its function is as follows. Involved in the catabolism of L-rhamnose (6-deoxy-L-mannose). Catalyzes the transfer of the gamma-phosphate group from ATP to the 1-hydroxyl group of L-rhamnulose to yield L-rhamnulose 1-phosphate. This chain is Rhamnulokinase, found in Listeria innocua serovar 6a (strain ATCC BAA-680 / CLIP 11262).